The following is a 433-amino-acid chain: 3-phosphoshikimate 1-carboxyvinyltransferase (433 aa).

The 3-phosphoshikimate site is built by lysine 22, serine 23, and arginine 27. Lysine 22 serves as a coordination point for phosphoenolpyruvate. Phosphoenolpyruvate-binding residues include glycine 95 and arginine 123. 4 residues coordinate 3-phosphoshikimate: serine 166, glutamine 168, aspartate 314, and lysine 341. Glutamine 168 serves as a coordination point for phosphoenolpyruvate. Aspartate 314 acts as the Proton acceptor in catalysis. Phosphoenolpyruvate is bound by residues arginine 345 and arginine 386.

Belongs to the EPSP synthase family. Monomer.

The protein resides in the cytoplasm. It catalyses the reaction 3-phosphoshikimate + phosphoenolpyruvate = 5-O-(1-carboxyvinyl)-3-phosphoshikimate + phosphate. Its pathway is metabolic intermediate biosynthesis; chorismate biosynthesis; chorismate from D-erythrose 4-phosphate and phosphoenolpyruvate: step 6/7. Catalyzes the transfer of the enolpyruvyl moiety of phosphoenolpyruvate (PEP) to the 5-hydroxyl of shikimate-3-phosphate (S3P) to produce enolpyruvyl shikimate-3-phosphate and inorganic phosphate. The sequence is that of 3-phosphoshikimate 1-carboxyvinyltransferase from Acidithiobacillus ferrooxidans (strain ATCC 23270 / DSM 14882 / CIP 104768 / NCIMB 8455) (Ferrobacillus ferrooxidans (strain ATCC 23270)).